Consider the following 248-residue polypeptide: Probable phosphatase VF_A0065 (248 aa).

Zn(2+)-binding residues include H8, H10, H16, H41, E74, H102, H132, D194, and H196.

Belongs to the PHP family. Zn(2+) serves as cofactor.

This Aliivibrio fischeri (strain ATCC 700601 / ES114) (Vibrio fischeri) protein is Probable phosphatase VF_A0065.